The primary structure comprises 208 residues: UPF0301 protein MAB_4928c (208 aa).

The protein belongs to the UPF0301 (AlgH) family.

The chain is UPF0301 protein MAB_4928c from Mycobacteroides abscessus (strain ATCC 19977 / DSM 44196 / CCUG 20993 / CIP 104536 / JCM 13569 / NCTC 13031 / TMC 1543 / L948) (Mycobacterium abscessus).